The sequence spans 117 residues: Large ribosomal subunit protein bL20 (117 aa).

This sequence belongs to the bacterial ribosomal protein bL20 family.

Its function is as follows. Binds directly to 23S ribosomal RNA and is necessary for the in vitro assembly process of the 50S ribosomal subunit. It is not involved in the protein synthesizing functions of that subunit. This chain is Large ribosomal subunit protein bL20, found in Brachyspira hyodysenteriae (strain ATCC 49526 / WA1).